The primary structure comprises 286 residues: MSLDAMKRKINSVQTTAKITNAMKLVATAKLKRQRDRLAAIKEYCHDYYDVIGLLLSVVDDVEFLKIPNAKDRTLYITINSTMGLAGSYNYNVNKLISKIVNETDITFTIGKKGHDFMRLSGRVDQVNTYLNLNDNDLTFDMSLQIAREALELYSQGEVNKICIIYTKFINAITFEVSVIDVLPFDKTALIKDHLAETIELAKDNIIFKPNKFELVKKILPTYIATVLYGSLIESKISENASRRNAMDAATKNAKALAENYKLIYNTLRQGKITREITEIVAGSDD.

This sequence belongs to the ATPase gamma chain family. F-type ATPases have 2 components, CF(1) - the catalytic core - and CF(0) - the membrane proton channel. CF(1) has five subunits: alpha(3), beta(3), gamma(1), delta(1), epsilon(1). CF(0) has three main subunits: a, b and c.

The protein localises to the cell membrane. Functionally, produces ATP from ADP in the presence of a proton gradient across the membrane. The gamma chain is believed to be important in regulating ATPase activity and the flow of protons through the CF(0) complex. In Ureaplasma parvum serovar 3 (strain ATCC 27815 / 27 / NCTC 11736), this protein is ATP synthase gamma chain.